Reading from the N-terminus, the 103-residue chain is Co-chaperonin GroES (103 aa).

Belongs to the GroES chaperonin family. As to quaternary structure, heptamer of 7 subunits arranged in a ring. Interacts with the chaperonin GroEL.

It is found in the cytoplasm. Its function is as follows. Together with the chaperonin GroEL, plays an essential role in assisting protein folding. The GroEL-GroES system forms a nano-cage that allows encapsulation of the non-native substrate proteins and provides a physical environment optimized to promote and accelerate protein folding. GroES binds to the apical surface of the GroEL ring, thereby capping the opening of the GroEL channel. The sequence is that of Co-chaperonin GroES from Rippkaea orientalis (strain PCC 8801 / RF-1) (Cyanothece sp. (strain PCC 8801)).